The following is a 509-amino-acid chain: Maturase K (509 aa).

Belongs to the intron maturase 2 family. MatK subfamily.

The protein resides in the plastid. The protein localises to the chloroplast. In terms of biological role, usually encoded in the trnK tRNA gene intron. Probably assists in splicing its own and other chloroplast group II introns. In Nicotiana bigelovii (Bigelov's tobacco), this protein is Maturase K.